Here is a 110-residue protein sequence, read N- to C-terminus: Large ribosomal subunit protein uL22 (110 aa).

It belongs to the universal ribosomal protein uL22 family. In terms of assembly, part of the 50S ribosomal subunit.

This protein binds specifically to 23S rRNA; its binding is stimulated by other ribosomal proteins, e.g. L4, L17, and L20. It is important during the early stages of 50S assembly. It makes multiple contacts with different domains of the 23S rRNA in the assembled 50S subunit and ribosome. Its function is as follows. The globular domain of the protein is located near the polypeptide exit tunnel on the outside of the subunit, while an extended beta-hairpin is found that lines the wall of the exit tunnel in the center of the 70S ribosome. The chain is Large ribosomal subunit protein uL22 from Baumannia cicadellinicola subsp. Homalodisca coagulata.